We begin with the raw amino-acid sequence, 599 residues long: Elongation factor 4 (599 aa).

Positions 5–187 constitute a tr-type G domain; the sequence is SHIRNFSIIA…RLVQSIPAPE (183 aa). Residues 17-22 and 134-137 each bind GTP; these read DHGKST and NKMD.

The protein belongs to the TRAFAC class translation factor GTPase superfamily. Classic translation factor GTPase family. LepA subfamily.

It localises to the cell inner membrane. The enzyme catalyses GTP + H2O = GDP + phosphate + H(+). Its function is as follows. Required for accurate and efficient protein synthesis under certain stress conditions. May act as a fidelity factor of the translation reaction, by catalyzing a one-codon backward translocation of tRNAs on improperly translocated ribosomes. Back-translocation proceeds from a post-translocation (POST) complex to a pre-translocation (PRE) complex, thus giving elongation factor G a second chance to translocate the tRNAs correctly. Binds to ribosomes in a GTP-dependent manner. This Pseudomonas entomophila (strain L48) protein is Elongation factor 4.